The chain runs to 1021 residues: tRNA wybutosine-synthesizing protein 4 (1021 aa).

S-adenosyl-L-methionine-binding positions include arginine 68, aspartate 122, 171–172 (DL), and glutamate 198. The JmjC domain maps to 826-980 (PTEAPANLAE…STGRDVYGNR (155 aa)).

Belongs to the methyltransferase superfamily. LCMT family.

It catalyses the reaction 7-[(3S)-3-amino-3-carboxypropyl]wyosine(37) in tRNA(Phe) + S-adenosyl-L-methionine = 7-[(3S)-(3-amino-3-methoxycarbonyl)propyl]wyosine(37) in tRNA(Phe) + S-adenosyl-L-homocysteine. The enzyme catalyses 7-[(3S)-(3-amino-3-methoxycarbonyl)propyl]wyosine(37) in tRNA(Phe) + S-adenosyl-L-methionine + CO2 = wybutosine(37) in tRNA(Phe) + S-adenosyl-L-homocysteine + 2 H(+). It functions in the pathway tRNA modification; wybutosine-tRNA(Phe) biosynthesis. Functionally, probable S-adenosyl-L-methionine-dependent methyltransferase that acts as a component of the wybutosine biosynthesis pathway. Wybutosine is a hyper modified guanosine with a tricyclic base found at the 3'-position adjacent to the anticodon of eukaryotic phenylalanine tRNA. May methylate the carboxyl group of leucine residues to form alpha-leucine ester residues. The chain is tRNA wybutosine-synthesizing protein 4 (PPM2) from Gibberella zeae (strain ATCC MYA-4620 / CBS 123657 / FGSC 9075 / NRRL 31084 / PH-1) (Wheat head blight fungus).